We begin with the raw amino-acid sequence, 482 residues long: Glutamate--tRNA ligase 2 (482 aa).

Positions 8–18 match the 'HIGH' region motif; the sequence is PSPTGQLHIGG. The short motif at 249–253 is the 'KMSKS' region element; it reads KLSKR. Lysine 252 provides a ligand contact to ATP.

Belongs to the class-I aminoacyl-tRNA synthetase family. Glutamate--tRNA ligase type 1 subfamily. In terms of assembly, monomer.

It is found in the cytoplasm. The catalysed reaction is tRNA(Glu) + L-glutamate + ATP = L-glutamyl-tRNA(Glu) + AMP + diphosphate. In terms of biological role, catalyzes the attachment of glutamate to tRNA(Glu) in a two-step reaction: glutamate is first activated by ATP to form Glu-AMP and then transferred to the acceptor end of tRNA(Glu). The chain is Glutamate--tRNA ligase 2 from Caldicellulosiruptor saccharolyticus (strain ATCC 43494 / DSM 8903 / Tp8T 6331).